Here is a 1026-residue protein sequence, read N- to C-terminus: Contactin-4 (1026 aa).

The first 18 residues, 1-18 (MRLPWELLVLQSFMLCLA), serve as a signal peptide directing secretion. 6 Ig-like C2-type domains span residues 32–117 (PSHV…AKLQ), 122–206 (ENFK…HQVL), 225–311 (PKIE…GQVT), 316–400 (PNWV…AELS), 406–493 (PDFS…GNVV), and 497–586 (PTKV…DKLS). 6 disulfides stabilise this stretch: cysteine 50–cysteine 100, cysteine 144–cysteine 194, cysteine 247–cysteine 295, cysteine 337–cysteine 384, cysteine 429–cysteine 477, and cysteine 519–cysteine 576. Asparagine 65, asparagine 90, and asparagine 191 each carry an N-linked (GlcNAc...) asparagine glycan. Asparagine 370, asparagine 375, and asparagine 466 each carry an N-linked (GlcNAc...) asparagine glycan. 4 Fibronectin type-III domains span residues 599-697 (PPEA…TEEA), 702-799 (TPAN…SAEE), 804-899 (PPAS…TRKP), and 900-995 (PPSQ…ISNS). Positions 685–710 (PSRPSEKRRTEEALPEVTPANVSGGG) are disordered. A compositionally biased stretch (basic and acidic residues) spans 687 to 696 (RPSEKRRTEE). N-linked (GlcNAc...) asparagine glycosylation is found at asparagine 705, asparagine 764, asparagine 858, asparagine 893, asparagine 911, asparagine 929, and asparagine 954. Serine 1000 carries GPI-anchor amidated serine lipidation. Positions 1001-1026 (GASTSNACTLSAISTIMISLTARSSL) are cleaved as a propeptide — removed in mature form.

The protein belongs to the immunoglobulin superfamily. Contactin family. In terms of assembly, interacts with PTPRG. Specifically expressed in the nervous system. Not expressed in heart, spleen, lung, liver, kidney or skeletal muscle. In the hippocampus, it is highly expressed in CA1 pyramidal cells and weakly expressed in other regions of the hippocampus.

The protein resides in the cell membrane. The protein localises to the secreted. Functionally, contactins mediate cell surface interactions during nervous system development. Has some neurite outgrowth-promoting activity. May be involved in synaptogenesis. This chain is Contactin-4 (Cntn4), found in Rattus norvegicus (Rat).